The sequence spans 2387 residues: Paternally-expressed gene 3 protein (2387 aa).

An SCAN box domain is found at 44-126 (HQRFRNFLYV…ALLEDYEAMY (83 aa)). Disordered regions lie at residues 127–194 (EPED…RDLA), 262–305 (DGHS…ICEA), 321–371 (ARSS…AFGG), and 392–423 (RYHF…EARR). 4 stretches are compositionally biased toward basic and acidic residues: residues 160–179 (SERE…DRWP), 291–305 (PETK…ICEA), 321–364 (ARSS…ERGP), and 404–423 (HDPR…EARR). The C2H2-type 1 zinc-finger motif lies at 451 to 473 (YVCDECGRSFAVISEFVEHQIVH). Positions 492-542 (SEAQSRPEGARRSEGAQAAGLAEHRGGQAQEHLRGSGDEEQDEPFLPSPTF) are disordered. A compositionally biased stretch (basic and acidic residues) spans 513–528 (AEHRGGQAQEHLRGSG). 2 C2H2-type zinc fingers span residues 555-577 (YECK…QKIH) and 610-632 (YECK…QKTH). A C2H2-type 4; degenerate zinc finger spans residues 668 to 690 (YDFREGGDAFGRSSDFMEHQKIH). Disordered regions lie at residues 704–747 (PLLH…EARG), 764–797 (FRPP…ESPY), and 820–858 (DHLA…NIER). The span at 711–720 (MPGSQKSHTI) shows a compositional bias: polar residues. A compositionally biased stretch (basic residues) spans 846 to 856 (HQKARAKKKNI). The segment at 884-906 (YECLECGEFFVRSSELAEHQKIH) adopts a C2H2-type 5 zinc-finger fold. 57 repeat units span residues 965–973 (PAQTSYAVE), 974–982 (PAQTSYAEE), 983–991 (PAQTSYTEA), 1001–1009 (PAQTSCIEE), 1010–1018 (PAQTSYTNP), 1028–1036 (PAQTSYTEA), 1046–1054 (PAQTSCIEE), 1055–1063 (PAQTSYTNP), 1073–1081 (PAQTSYTEA), 1091–1099 (PAQTNYTEE), 1109–1117 (PSQTSCIEE), 1118–1126 (PAQTSYTDP), 1136–1144 (PAQTSYTQE), 1145–1153 (PAQTSCTEE), 1154–1162 (PAQTSCTEE), 1163–1171 (PAQTSYTQE), 1172–1180 (PAQTSYTKE), 1190–1198 (PAQTSCIEE), 1199–1207 (PAQTNYTKE), 1217–1225 (PAQTSYTDP), 1235–1243 (PAQTNYTVE), 1253–1261 (PSQTSCIEE), 1280–1288 (PAQTSCTEE), 1289–1297 (PAQTSYTQE), 1298–1306 (PAQTSCTEE), 1307–1315 (PAQTSCTEE), 1316–1324 (PAQTSYTQE), 1325–1333 (PAQTSCTEE), 1334–1342 (PAQTSYTQE), 1343–1351 (PAQTSCTEE), 1352–1360 (PAQTSYTEE), 1361–1369 (PAQTSYTEE), 1370–1378 (PAQTSYTQE), 1379–1387 (PAQTSCTEE), 1388–1396 (PAQTSYTEE), 1397–1405 (PAQTSYTEE), 1406–1414 (PAQTSYTQE), 1415–1423 (PAQTSYTEE), 1424–1432 (PAQTSYTEE), 1433–1441 (PAQTSYAQE), 1442–1450 (PAQTSYAEE), 1451–1459 (PAQTSYAEE), 1460–1468 (PAQTSYAEE), 1469–1477 (PAQTSYTQE), 1478–1486 (PAQTNYTEE), 1496–1504 (PAQTSYAEE), 1505–1513 (PAQTSYPEE), 1514–1522 (PAQTSYAEE), 1523–1531 (PAQTSYAEE), 1532–1540 (PAQTSYPEE), 1541–1549 (PAQTSYTEE), 1550–1558 (PAQTSYAKE), 1559–1567 (PAQTSYPEE), 1568–1576 (PAQTSYAEE), 1577–1585 (PAQTSYAEE), 1586–1594 (PAQTSYAEE), and 1595–1603 (PAQTSYSEE). 2 stretches are compositionally biased toward polar residues: residues 965–989 (PAQT…TSYT) and 1001–1020 (PAQT…NPAA). A 37 X 9 AA repeat of P-A-Q-T-X-Y-X-X-E region spans residues 965-1603 (PAQTSYAVEP…EPAQTSYSEE (639 aa)). Residues 965-1651 (PAQTSYAVEP…RPDMPRNQPR (687 aa)) form a disordered region. Residues 1046–1079 (PAQTSCIEEPAQTSYTNPAAETSYTEEPAQTSYT) are compositionally biased toward polar residues. Composition is skewed to polar residues over residues 1107–1178 (EEPS…TSYT), 1190–1206 (PAQT…NYTK), 1217–1242 (PAQT…NYTV), 1251–1484 (EEPS…TNYT), and 1496–1601 (PAQT…TSYS). The segment at 1859–1881 (NECKECGECFATVEDLGRHQKIY) adopts a C2H2-type 6; degenerate zinc-finger fold. The disordered stretch occupies residues 1900–1921 (LGLDGSPEEELEEQEEPEEPED). Acidic residues predominate over residues 1905 to 1921 (SPEEELEEQEEPEEPED). C2H2-type zinc fingers lie at residues 1924–1946 (YGCK…QKVH), 1980–2002 (YECP…QKVH), 2040–2062 (PQCQ…ARGH), 2097–2119 (YECE…MRVH), and 2148–2170 (YECK…QKLH). The disordered stretch occupies residues 2059-2102 (ARGHAGEGLPDQGQGGAGAAGPGPAPTEPQQDPGEEQRYECETC). The segment at 2204-2322 (NVEAAEPEVE…DCGECGETFP (119 aa)) is disordered. 2 stretches are compositionally biased toward acidic residues: residues 2208-2228 (AEPE…EVEA) and 2257-2311 (EQPD…EEPY). 2 consecutive C2H2-type zinc fingers follow at residues 2312-2334 (YDCG…LTAH) and 2363-2385 (FKCD…QNTH).

Belongs to the krueppel C2H2-type zinc-finger protein family. Homodimer. Interacts with SIAH1A and SIAH2. Interacts with TRAF2. As to expression, expressed at high levels in the cerebellum and at moderate levels in the testis and ovary.

The protein resides in the nucleus. It localises to the cytoplasm. Its function is as follows. Induces apoptosis in cooperation with SIAH1A. Acts as a mediator between p53/TP53 and BAX in a neuronal death pathway that is activated by DNA damage. Acts synergistically with TRAF2 and inhibits TNF induced apoptosis through activation of NF-kappa-B. In Bos taurus (Bovine), this protein is Paternally-expressed gene 3 protein (PEG3).